The chain runs to 290 residues: Release factor glutamine methyltransferase (290 aa).

Positions 140 and 181 each coordinate S-adenosyl-L-methionine. 181 to 184 is a binding site for substrate; it reads NPPY.

This sequence belongs to the protein N5-glutamine methyltransferase family. PrmC subfamily.

The catalysed reaction is L-glutaminyl-[peptide chain release factor] + S-adenosyl-L-methionine = N(5)-methyl-L-glutaminyl-[peptide chain release factor] + S-adenosyl-L-homocysteine + H(+). Functionally, methylates the class 1 translation termination release factors RF1/PrfA and RF2/PrfB on the glutamine residue of the universally conserved GGQ motif. This Chlamydia trachomatis serovar D (strain ATCC VR-885 / DSM 19411 / UW-3/Cx) protein is Release factor glutamine methyltransferase.